Reading from the N-terminus, the 542-residue chain is MAVSAPLRSLEEEVTCSICLDYLRDPVTIDCGHVFCRSCTSDIRPISGNRPVCPLCKKPFKKENIRPVWQLASLVENIERLKVDNGKQPGELAREPQDMKLCERHQEKLHYYCEDDGKLLCVMCRESREHRPHTAVLVEKAALPHREKILNHLNTLRRDRDKIQGFQAKGEADILAALTKLQEQRQYIVAEFKQGHQFLKKREQHLLDQLATLEQLLTEGREKFKTRGVSELDRLTLVISELEGKARQPAAELMQLSDRLSCLSLRYPRKKFWIGKAIPHMVKRKAGEFSDKLLSLQRGLRQFQGKLLRDLEYKTVSVTLDPQSASGYLQLSEDWKCITYTGQYQSDCLLPQQFDCEPGVLGSKGFTWGKVYWEVELEREGWSEDEEEGEEEEEGEEEEEDEEPGYGDRYEDWETDEEDESLGEEEEEEEEEEEEVQESCMVGVAKDSVKRKGNLSLRPEDGVWALRLSPSGIWANTSPEAQLFPVLRPRRVGIALDYEGGTVTFTNAESQELIYTFTTTFTRRLVPFLWLKWPEARLLLRP.

The RING-type zinc finger occupies 16-57; that stretch reads CSICLDYLRDPVTIDCGHVFCRSCTSDIRPISGNRPVCPLCK. The B box-type zinc finger occupies 97–138; it reads QDMKLCERHQEKLHYYCEDDGKLLCVMCRESREHRPHTAVLV. Positions 102, 105, 124, and 130 each coordinate Zn(2+). Residues 197–243 adopt a coiled-coil conformation; sequence QFLKKREQHLLDQLATLEQLLTEGREKFKTRGVSELDRLTLVISELE. Residues 298–542 enclose the B30.2/SPRY domain; the sequence is RGLRQFQGKL…WPEARLLLRP (245 aa). The disordered stretch occupies residues 379-440; it reads REGWSEDEEE…EEEEEVQESC (62 aa). Composition is skewed to acidic residues over residues 383–405 and 413–437; these read SEDEEEGEEEEEGEEEEEDEEPG and WETDEEDESLGEEEEEEEEEEEEVQ. The stretch at 411–440 forms a coiled coil; it reads EDWETDEEDESLGEEEEEEEEEEEEVQESC.

This sequence belongs to the TRIM/RBCC family. As to quaternary structure, interacts with TBK1; this interaction bridges together TBK1 and NEMO in order to activate TBK1. Interacts with INCA1. Post-translationally, autoubiquitinates upon viral infection. In turn, autoubiquitinated TRIM26 recruits NEMO and bridges TBK1-NEMO interaction.

Its subcellular location is the cytoplasm. The protein resides in the nucleus. It catalyses the reaction S-ubiquitinyl-[E2 ubiquitin-conjugating enzyme]-L-cysteine + [acceptor protein]-L-lysine = [E2 ubiquitin-conjugating enzyme]-L-cysteine + N(6)-ubiquitinyl-[acceptor protein]-L-lysine.. In terms of biological role, E3 ubiquitin-protein ligase which regulates the IFN-beta production and antiviral response downstream of various DNA-encoded pattern-recognition receptors (PRRs). Also plays a central role in determining the response to different forms of oxidative stress by controlling levels of DNA glycosylases NEIL1, NEIL3 and NTH1 that are involved in repair of damaged DNA. Promotes nuclear IRF3 ubiquitination and proteasomal degradation. Bridges together TBK1 and NEMO during the innate response to viral infection leading to the activation of TBK1. Positively regulates LPS-mediated inflammatory innate immune response by catalyzing the 'Lys-11'-linked polyubiquitination of TAB1 to enhance its activation and subsequent NF-kappa-B and MAPK signaling. In a manner independent of its catalytic activity, inhibits WWP2, a SOX2-directed E3 ubiquitin ligase, and thus protects SOX2 from polyubiquitination and proteasomal degradation. Ubiquitinates the histone acetyltransferase protein complex component PHF20 and thereby triggers its degradation in the nucleus after its recruitment by the histone demethylase KDM6B, serving as a scaffold protein. Upon induction by TGF-beta, ubiquitinates the TFIID component TAF7 for proteasomal degradation. Induces ferroptosis by ubiquitinating SLC7A11, a critical protein for lipid reactive oxygen species (ROS) scavenging. This Rattus norvegicus (Rat) protein is Tripartite motif-containing protein 26 (Trim26).